Reading from the N-terminus, the 529-residue chain is Lysine--tRNA ligase (529 aa).

A 'HIGH' region motif is present at residues 44 to 52 (PSGLPHIGT). Positions 290-294 (KISKS) match the 'KMSKS' region motif. Lys293 is a binding site for ATP.

It belongs to the class-I aminoacyl-tRNA synthetase family.

The protein localises to the cytoplasm. The catalysed reaction is tRNA(Lys) + L-lysine + ATP = L-lysyl-tRNA(Lys) + AMP + diphosphate. The chain is Lysine--tRNA ligase from Rickettsia akari (strain Hartford).